Reading from the N-terminus, the 306-residue chain is Latrophilin receptor-like protein A (306 aa).

Topologically, residues 1–15 are extracellular; it reads MPSQLLNTVLSYLTD. A helical membrane pass occupies residues 16 to 36; the sequence is ILLSLSIVGSFLTIFTFMLYP. Topologically, residues 37–41 are cytoplasmic; that stretch reads KLRSY. Residues 42–62 traverse the membrane as a helical segment; it reads PIKLIIYLCMSIVFSLFFFEI. Topologically, residues 63-70 are extracellular; that stretch reads SFRSSNSL. The chain crosses the membrane as a helical span at residues 71–91; that stretch reads FCIPAAILVHYFFLANFFWTF. The Cytoplasmic portion of the chain corresponds to 92–113; it reads SVSFNFFQMIVKRNRDSEFYER. Residues 114 to 134 form a helical membrane-spanning segment; it reads YYHLISWGIPFIIIIFCAAFK. Residues 135–152 are Extracellular-facing; the sequence is KYVDRGGFCYLEDQYSVY. The helical transmembrane segment at 153-173 threads the bilayer; the sequence is FGFFMPGVIIVCSNICIYVFV. Residues 174–196 are Cytoplasmic-facing; the sequence is AKEIYKTLRHTPTQKRQTVKEFR. The chain crosses the membrane as a helical span at residues 197–217; that stretch reads VYFSIFVSIGSSWIFGFIYMF. Over 218-222 the chain is Extracellular; the sequence is SDSNS. A helical membrane pass occupies residues 223–243; the sequence is IIGYIFLILFSISTSLQGFFI. The Cytoplasmic portion of the chain corresponds to 244-306; the sequence is FISYCLNYKV…TTTTTNVYSA (63 aa). The segment at 279–306 is disordered; that stretch reads TTQSGPTGTTDSSSTMTSTTTTTNVYSA.

This sequence belongs to the G-protein coupled receptor 2 family. LN-TM7 subfamily.

The protein localises to the membrane. This is Latrophilin receptor-like protein A (lrlA) from Dictyostelium discoideum (Social amoeba).